Reading from the N-terminus, the 370-residue chain is MYIQNLELTSYRNYERAELQFENKVNVIIGENAQGKTNLMEAIYVLSMAKSHRTSNDKELIRWDEDYAKIEGRVMKRNGDIPMQLVISKKGKKGKVNHIEQQKLSQYVGALNTIMFAPEDLNLVKGSPQVRRRFLDMEIGQVSAVYLYDLSLYQKILSQRNHFLKQLQSRKQTDRTMLDVLTDQLIEAAAKVVAKRLQFTAQLEKWAQPIHSGISRGLEELTLKYHTALDVSDPKDLSKIGNSYQESFSKLKEKEIERGVTLFGPHRDDVLFYVNGRDVQTYGSQGQQRTTALSLKLAEIDLIHEEIGEYPILLLDDVLSELDDYRQSHLLHTIQGRVQTFVTTTSVDGIDHDTLHQAGMFRVENGTLVK.

Residue Gly-30 to Thr-37 participates in ATP binding.

Belongs to the RecF family.

The protein localises to the cytoplasm. Functionally, the RecF protein is involved in DNA metabolism; it is required for DNA replication and normal SOS inducibility. RecF binds preferentially to single-stranded, linear DNA. It also seems to bind ATP. The sequence is that of DNA replication and repair protein RecF from Bacillus velezensis (strain DSM 23117 / BGSC 10A6 / LMG 26770 / FZB42) (Bacillus amyloliquefaciens subsp. plantarum).